A 61-amino-acid polypeptide reads, in one-letter code: Probable tautomerase lin2709 (61 aa).

Proline 2 serves as the catalytic Proton acceptor; via imino nitrogen.

Belongs to the 4-oxalocrotonate tautomerase family.

The protein is Probable tautomerase lin2709 of Listeria innocua serovar 6a (strain ATCC BAA-680 / CLIP 11262).